Consider the following 703-residue polypeptide: Elongation factor G (703 aa).

A tr-type G domain is found at 8-290; it reads ARYRNIGICA…AVIEYLPAPT (283 aa). GTP contacts are provided by residues 17–24, 88–92, and 142–145; these read AHVDAGKT, DTPGH, and NKMD.

This sequence belongs to the TRAFAC class translation factor GTPase superfamily. Classic translation factor GTPase family. EF-G/EF-2 subfamily.

The protein localises to the cytoplasm. Catalyzes the GTP-dependent ribosomal translocation step during translation elongation. During this step, the ribosome changes from the pre-translocational (PRE) to the post-translocational (POST) state as the newly formed A-site-bound peptidyl-tRNA and P-site-bound deacylated tRNA move to the P and E sites, respectively. Catalyzes the coordinated movement of the two tRNA molecules, the mRNA and conformational changes in the ribosome. The sequence is that of Elongation factor G from Teredinibacter turnerae (strain ATCC 39867 / T7901).